We begin with the raw amino-acid sequence, 412 residues long: Glucose-1-phosphate adenylyltransferase (412 aa).

Alpha-D-glucose 1-phosphate-binding positions include glycine 169, 184–185, and serine 201; that span reads EK.

Belongs to the bacterial/plant glucose-1-phosphate adenylyltransferase family. In terms of assembly, homotetramer.

It carries out the reaction alpha-D-glucose 1-phosphate + ATP + H(+) = ADP-alpha-D-glucose + diphosphate. Its pathway is glycan biosynthesis; glycogen biosynthesis. In terms of biological role, involved in the biosynthesis of ADP-glucose, a building block required for the elongation reactions to produce glycogen. Catalyzes the reaction between ATP and alpha-D-glucose 1-phosphate (G1P) to produce pyrophosphate and ADP-Glc. This chain is Glucose-1-phosphate adenylyltransferase, found in Geobacter metallireducens (strain ATCC 53774 / DSM 7210 / GS-15).